A 333-amino-acid chain; its full sequence is Nucleoid-associated protein (333 aa).

The protein belongs to the YejK family.

It is found in the cytoplasm. The protein localises to the nucleoid. The polypeptide is Nucleoid-associated protein (Metapseudomonas resinovorans (Pseudomonas resinovorans)).